The following is a 292-amino-acid chain: Protein LicB (292 aa).

2 consecutive EamA domains span residues 70 to 139 (ALSG…LLAI) and 160 to 286 (LGWS…VTLY).

This is Protein LicB (licB) from Haemophilus influenzae (strain ATCC 51907 / DSM 11121 / KW20 / Rd).